We begin with the raw amino-acid sequence, 441 residues long: Eukaryotic translation initiation factor 3 subunit M (441 aa).

The 170-residue stretch at 196-365 folds into the PCI domain; the sequence is ESEQAYTYLL…QTFLIHRSTY (170 aa). A compositionally biased stretch (basic and acidic residues) spans 405-418; sequence KEEEANKADNKYDS. Positions 405–441 are disordered; that stretch reads KEEEANKADNKYDSARGFQRGGQRKQPRALDDDMGLE.

The protein belongs to the eIF-3 subunit M family. Component of the eukaryotic translation initiation factor 3 (eIF-3) complex.

It localises to the cytoplasm. Functionally, component of the eukaryotic translation initiation factor 3 (eIF-3) complex, which is involved in protein synthesis of a specialized repertoire of mRNAs and, together with other initiation factors, stimulates binding of mRNA and methionyl-tRNAi to the 40S ribosome. The eIF-3 complex specifically targets and initiates translation of a subset of mRNAs involved in cell proliferation. The chain is Eukaryotic translation initiation factor 3 subunit M from Phaeosphaeria nodorum (strain SN15 / ATCC MYA-4574 / FGSC 10173) (Glume blotch fungus).